A 744-amino-acid chain; its full sequence is Zinc finger protein 366 (744 aa).

The disordered stretch occupies residues 206–228 (KQPPEPLLPRKAEPQESEETKQK). Over residues 213–228 (LPRKAEPQESEETKQK) the composition is skewed to basic and acidic residues. 11 consecutive C2H2-type zinc fingers follow at residues 253–275 (WQCPTCEKSYTSKYNLVTHILGH), 281–303 (HACTHCGKLFKQLSHLHTHMLTH), 309–331 (HKCQVCHKAFTQTSHLKRHMMQH), 337–359 (HNCRVCGRGFAYPSELKAHEAKH), 365–387 (NICVECGLDFPTLAQLKRHLTTH), 393–415 (YNCSECDKTFQYPSQLQNHMMKH), 421–443 (YICSECGMEFVQPHHLKQHSLTH), 449–471 (HKCGICGREFTLLANMKRHVLIH), 477–499 (YQCHLCYKSFVQKQTLKAHMIVH), 505–527 (FKCKLCGKEFNRMHNLMGHMHLH), and 533–556 (FKCLYCPSKFTLKGNLTRHMKVKH). The segment at 455–744 (GREFTLLANM…MEKQAVLLGI (290 aa)) is interaction with NRIP1. The short motif at 590 to 594 (PFDLS) is the PXDLS element. Disordered stretches follow at residues 603–627 (VFQSDGESAQGSHCHEEEEEDNCYE) and 664–692 (KEEKEDASKGEWEKRSKGDLGAEGGQERD).

In terms of assembly, interacts with ESR1 and NRIP1. Interacts (via PXDLS motif) with CTBP1. Expressed in immature and mature dendritic cells (DCs). Not detected in other blood cell types.

Its subcellular location is the nucleus. Functionally, has transcriptional repression activity. Acts as a corepressor of ESR1; the function seems to involve CTBP1 and histone deacetylases. The polypeptide is Zinc finger protein 366 (Homo sapiens (Human)).